Here is a 561-residue protein sequence, read N- to C-terminus: Putative transport protein ASA_2308 (561 aa).

A run of 5 helical transmembrane segments spans residues 8–28 (LLHQ…LLLG), 37–57 (IGNT…GFEF), 66–86 (FMLF…SVFL), 90–110 (IHYI…TVGL), and 161–181 (NMGI…MLVV). RCK C-terminal domains lie at 206–291 (SDNE…NYRN) and 293–376 (KEVF…KIGF). The next 5 membrane-spanning stretches (helical) occupy residues 386-406 (LVAF…SLVF), 409-429 (LEFG…MGYL), 450-470 (LGLA…ILDH), 476-496 (AVVL…GYLF), and 541-561 (TYAV…GFWF).

Belongs to the AAE transporter (TC 2.A.81) family. YbjL subfamily.

Its subcellular location is the cell membrane. The polypeptide is Putative transport protein ASA_2308 (Aeromonas salmonicida (strain A449)).